The chain runs to 935 residues: MSSKSSAWQVELPVHRLERNLIFLPGITYRVVFDKQKALDLASRWSAKERSERVAAIASRFGLSSKHLVACVPGYPDSDTCTVCVVNGFYEMSETTVVSFKGVTRGYIVQSDEDTATVEIQEETSVPHPDTKDMIRLFDNIDQFLTYYKDEGTLDSEDKEERSRHILLRLTPLATLLNAQLSASDVSAGLKRLRQAYGRKSGDFAHYNDVLVALFPFPIELKISYLRSKGAERIEVFNKCVAFANKVFEEHLDTSYLAEIWSSLDHHSSKAQSNVSRSQFISNHLRNLRRLVEEMGLMRVTGRGSRTAEDNDENKSIQDFVDSLDKYLINEDGKRLIAKDFERLKQMQSSSSDYQVLRAYLEIIMDLPWQRLDSFVESVNVDLARAREQLDADHYGMESAKERILEYLAVLNLHNQKQPRHEPEFVYGTGDEPTTKERPASTLKAPILLLTGPPGVGKTSLARSIATTLGRKFQRISVGGLNDFADLKGHRRTYVGAIPGLIVQALRRSQSMNPVILLDEVDKIGSNSRKGDPEAALLEILDPEQNTNFHDHYIGFPIDLSQILFVCTSNDLWQLSDPLRDRMEVIELAGYNYMEKVEISKKYLIPRQLERAGLSSDAVAMDDETILKMATHYTSEPGIRNLERLIAAICRGKAVERQMGEATKTVTVHDLAKYIGSPSHLRATAAGETKFQKGYGVVNGLSYNSDGSGSLLRFEMIGLPGSQKMNCTGRLGEVLLESSQIANTLVGYLLHNNLVAGTQEFRDELLKRYENTSVHLHVPEGAISKDGPSAGITMTLCLMSLVLRKKVPETLAMTGEITLTGKVLPIGGVREKLLGAHLAGKVNKVLLPRQNRKDVIEDFIYNLRNRELAKELFAKFLDEEEQLLKEGRTHAGEPEKWVYQTLGLEIVYVDDFSDVLASVWEGEVLLTGGIREARI.

Residues leucine 12 to glycine 296 form the Lon N-terminal domain. Residue glycine 452 to threonine 459 coordinates ATP. One can recognise a Lon proteolytic domain in the interval glutamine 692–glycine 922. Residues serine 789 and lysine 832 contribute to the active site. Positions alanine 933–isoleucine 935 match the Microbody targeting signal motif.

It belongs to the peptidase S16 family.

Its subcellular location is the peroxisome matrix. The catalysed reaction is Hydrolysis of proteins in presence of ATP.. Its function is as follows. ATP-dependent serine protease that mediates the selective degradation of misfolded and unassembled polypeptides in the peroxisomal matrix. Necessary for type 2 peroxisome targeting signal (PTS2)-containing protein processing and facilitates peroxisome matrix protein import. The sequence is that of Lon protease homolog 2, peroxisomal (PLN) from Pichia angusta (Yeast).